Here is a 123-residue protein sequence, read N- to C-terminus: MPTIQQLIRKPRQPKIKRSKSQHMEGCPQKRGVCTRVYTTTPKKPNSAMRKVAKVRLTNGYEVISYIPGESHNLQEHSVVLIRGGRVKDLPGVRYHILRGVLDTQGVKDRRQRRSKYGAKRPK.

A disordered region spans residues 1–30 (MPTIQQLIRKPRQPKIKRSKSQHMEGCPQK). Basic residues predominate over residues 9-21 (RKPRQPKIKRSKS). Asp-89 is subject to 3-methylthioaspartic acid. Residues 104 to 123 (TQGVKDRRQRRSKYGAKRPK) form a disordered region. Residues 110–123 (RRQRRSKYGAKRPK) are compositionally biased toward basic residues.

The protein belongs to the universal ribosomal protein uS12 family. As to quaternary structure, part of the 30S ribosomal subunit. Contacts proteins S8 and S17. May interact with IF1 in the 30S initiation complex.

Functionally, with S4 and S5 plays an important role in translational accuracy. Interacts with and stabilizes bases of the 16S rRNA that are involved in tRNA selection in the A site and with the mRNA backbone. Located at the interface of the 30S and 50S subunits, it traverses the body of the 30S subunit contacting proteins on the other side and probably holding the rRNA structure together. The combined cluster of proteins S8, S12 and S17 appears to hold together the shoulder and platform of the 30S subunit. This chain is Small ribosomal subunit protein uS12, found in Jannaschia sp. (strain CCS1).